Here is a 363-residue protein sequence, read N- to C-terminus: NAD(P)H-quinone oxidoreductase subunit 1, chloroplastic (363 aa).

A run of 8 helical transmembrane segments spans residues 30–50 (LFPI…IVWL), 98–118 (FSIG…VIPF), 127–147 (LSIG…GLLM), 165–185 (AAQS…ISLL), 203–223 (FWGW…ISSL), 248–268 (YSGI…LVSS), 300–320 (VFGT…FLFI), and 336–356 (LLNL…LLTT).

Belongs to the complex I subunit 1 family. In terms of assembly, NDH is composed of at least 16 different subunits, 5 of which are encoded in the nucleus.

Its subcellular location is the plastid. It localises to the chloroplast thylakoid membrane. The enzyme catalyses a plastoquinone + NADH + (n+1) H(+)(in) = a plastoquinol + NAD(+) + n H(+)(out). The catalysed reaction is a plastoquinone + NADPH + (n+1) H(+)(in) = a plastoquinol + NADP(+) + n H(+)(out). Its function is as follows. NDH shuttles electrons from NAD(P)H:plastoquinone, via FMN and iron-sulfur (Fe-S) centers, to quinones in the photosynthetic chain and possibly in a chloroplast respiratory chain. The immediate electron acceptor for the enzyme in this species is believed to be plastoquinone. Couples the redox reaction to proton translocation, and thus conserves the redox energy in a proton gradient. The protein is NAD(P)H-quinone oxidoreductase subunit 1, chloroplastic of Nicotiana tomentosiformis (Tobacco).